Reading from the N-terminus, the 263-residue chain is Probable ABC transporter permease protein ycf63 (263 aa).

The next 6 membrane-spanning stretches (helical) occupy residues 43–63 (LVGP…SMVF), 82–102 (AVIV…VIIA), 136–156 (LVFP…TISL), 159–179 (SIAI…SIFL), 199–219 (LCFG…SSGG), and 230–250 (SVVT…YFMF).

Belongs to the MlaE permease family.

Its subcellular location is the plastid. The protein localises to the chloroplast membrane. In terms of biological role, could be part of an ABC transporter complex. The polypeptide is Probable ABC transporter permease protein ycf63 (ycf63) (Porphyra purpurea (Red seaweed)).